The sequence spans 215 residues: Urease accessory protein UreG (215 aa).

24–31 (GPVGSGKT) is a GTP binding site.

Belongs to the SIMIBI class G3E GTPase family. UreG subfamily. In terms of assembly, homodimer. UreD, UreF and UreG form a complex that acts as a GTP-hydrolysis-dependent molecular chaperone, activating the urease apoprotein by helping to assemble the nickel containing metallocenter of UreC. The UreE protein probably delivers the nickel.

The protein localises to the cytoplasm. Its function is as follows. Facilitates the functional incorporation of the urease nickel metallocenter. This process requires GTP hydrolysis, probably effectuated by UreG. This Burkholderia orbicola (strain MC0-3) protein is Urease accessory protein UreG.